The sequence spans 360 residues: Photosystem II protein D1 1 (360 aa).

Helical transmembrane passes span 29 to 46 (YIGWFGVLMIPTLLTATT), 118 to 133 (HFLIGIFCYLGRQWEL), and 142 to 156 (WICVAYSAPVAAATA). A chlorophyll a-binding site is contributed by histidine 118. A pheophytin a-binding site is contributed by tyrosine 126. [CaMn4O5] cluster is bound by residues aspartate 170 and glutamate 189. A helical membrane pass occupies residues 197–218 (FHMLGVAGVFGGALFAAMHGSL). Chlorophyll a is bound at residue histidine 198. A quinone-binding positions include histidine 215 and 264–265 (SF). Histidine 215 is a Fe cation binding site. Histidine 272 provides a ligand contact to Fe cation. The helical transmembrane segment at 274–288 (FLGAWPVVGIWFAAL) threads the bilayer. Residues histidine 332, glutamate 333, aspartate 342, and alanine 344 each contribute to the [CaMn4O5] cluster site. Residues 345–360 (SGDAQMVALNAPAIEG) constitute a propeptide that is removed on maturation.

The protein belongs to the reaction center PufL/M/PsbA/D family. As to quaternary structure, PSII is composed of 1 copy each of membrane proteins PsbA, PsbB, PsbC, PsbD, PsbE, PsbF, PsbH, PsbI, PsbJ, PsbK, PsbL, PsbM, PsbT, PsbX, PsbY, PsbZ, Psb30/Ycf12, peripheral proteins PsbO, CyanoQ (PsbQ), PsbU, PsbV and a large number of cofactors. It forms dimeric complexes. Requires The D1/D2 heterodimer binds P680, chlorophylls that are the primary electron donor of PSII, and subsequent electron acceptors. It shares a non-heme iron and each subunit binds pheophytin, quinone, additional chlorophylls, carotenoids and lipids. D1 provides most of the ligands for the Mn4-Ca-O5 cluster of the oxygen-evolving complex (OEC). There is also a Cl(-1) ion associated with D1 and D2, which is required for oxygen evolution. The PSII complex binds additional chlorophylls, carotenoids and specific lipids. as cofactor. In terms of processing, C-terminally processed by CtpA; processing is essential to allow assembly of the oxygen-evolving complex and photosynthetic growth. Post-translationally, tyr-161 forms a radical intermediate that is referred to as redox-active TyrZ, YZ or Y-Z. C-terminally processed by CtpA; processing is essential to allow assembly of the oxygen-evolving complex and thus photosynthetic growth.

It is found in the cellular thylakoid membrane. It carries out the reaction 2 a plastoquinone + 4 hnu + 2 H2O = 2 a plastoquinol + O2. Functionally, photosystem II (PSII) is a light-driven water:plastoquinone oxidoreductase that uses light energy to abstract electrons from H(2)O, generating O(2) and a proton gradient subsequently used for ATP formation. It consists of a core antenna complex that captures photons, and an electron transfer chain that converts photonic excitation into a charge separation. The D1/D2 (PsbA/PsbD) reaction center heterodimer binds P680, the primary electron donor of PSII as well as several subsequent electron acceptors. This is Photosystem II protein D1 1 from Synechocystis sp. (strain ATCC 27184 / PCC 6803 / Kazusa).